The following is a 205-amino-acid chain: Thymidylate kinase (205 aa).

An ATP-binding site is contributed by 9 to 16 (GPEGSGKT).

The protein belongs to the thymidylate kinase family.

It catalyses the reaction dTMP + ATP = dTDP + ADP. Phosphorylation of dTMP to form dTDP in both de novo and salvage pathways of dTTP synthesis. The sequence is that of Thymidylate kinase from Staphylococcus aureus (strain MSSA476).